Here is a 1365-residue protein sequence, read N- to C-terminus: Serine/threonine-protein kinase LMTK1 (1365 aa).

Residues 32–52 (LAVVAVSFSGIFTVVILMLAC) form a helical membrane-spanning segment. In terms of domain architecture, Protein kinase spans 126-396 (LLYLKEIGHG…PTAEEVHLLL (271 aa)). ATP is bound by residues 132-140 (IGHGWFGKV) and K157. D254 serves as the catalytic Proton acceptor. S500 bears the Phosphoserine mark. 5 disordered regions span residues 550 to 623 (PDCA…LPAE), 638 to 698 (DDPL…GYVS), 791 to 1186 (QEAE…PAVP), 1237 to 1293 (ESPT…EWDG), and 1343 to 1365 (ISDSDAQSVGGPAAGAGGRYTEA). Polar residues predominate over residues 560 to 575 (QAVTDQDNNSEESTVA). Composition is skewed to low complexity over residues 638 to 655 (DDPLGASPSGSPGAQPSP) and 675 to 686 (SSNMSANNNSAS). Polar residues-rich tracts occupy residues 848 to 860 (LESSGSSLGQEAP) and 869 to 879 (EATSGVFTDLS). Low complexity-rich tracts occupy residues 904–918 (PDSLDSLDIPSSASD) and 981–993 (PLLSVSLGGLSKK). Positions 1015–1030 (PEKHSGIQDSQKEQDL) are enriched in basic and acidic residues. Residue S1035 is modified to Phosphoserine. Residues 1037–1053 (GHQSVQAFPRSAVSSEV) show a composition bias toward polar residues. The span at 1072–1083 (PLGAQGPVGVQP) shows a compositional bias: low complexity. Positions 1104–1132 (GSGTEPQGPSGQLSGRAQQGQMGNPSTPR) are enriched in polar residues. The segment covering 1150-1164 (PEEDEDTEDSEESDE) has biased composition (acidic residues). T1156 carries the phosphothreonine modification. 5 positions are modified to phosphoserine: S1159, S1162, S1175, S1178, and S1253. Over residues 1354–1365 (PAAGAGGRYTEA) the composition is skewed to gly residues.

This sequence belongs to the protein kinase superfamily. Tyr protein kinase family. Interacts with CDK5. In terms of processing, autophosphorylated. Phosphorylated by CDK5. In terms of tissue distribution, expressed in brain, and, to a lower extent, in kidney, heart, lung and skeletal muscle. In the brain, expressed in the olfactory bulb, cerebellum, striatum, hippocampal formation, thalamus, hypothalamus, and pontine nuclei (at protein level).

It localises to the membrane. It is found in the cytoplasm. The protein localises to the perinuclear region. The protein resides in the cell projection. Its subcellular location is the dendrite. It localises to the axon. It is found in the growth cone. The catalysed reaction is L-seryl-[protein] + ATP = O-phospho-L-seryl-[protein] + ADP + H(+). It catalyses the reaction L-threonyl-[protein] + ATP = O-phospho-L-threonyl-[protein] + ADP + H(+). Its function is as follows. May be involved in neuronal differentiation. This chain is Serine/threonine-protein kinase LMTK1 (Aatk), found in Mus musculus (Mouse).